We begin with the raw amino-acid sequence, 153 residues long: Arginine repressor (153 aa).

The protein belongs to the ArgR family.

Its subcellular location is the cytoplasm. It functions in the pathway amino-acid biosynthesis; L-arginine biosynthesis [regulation]. In terms of biological role, regulates arginine biosynthesis genes. This Glaesserella parasuis serovar 5 (strain SH0165) (Haemophilus parasuis) protein is Arginine repressor.